The chain runs to 174 residues: Protein GrpE (174 aa).

Residues 1-35 (MAQDIKNEEVEEVQEEEVVETAEETTPEKSELDLA) form a disordered region. Residues 9-25 (EVEEVQEEEVVETAEET) show a composition bias toward acidic residues. Over residues 26–35 (TPEKSELDLA) the composition is skewed to basic and acidic residues.

The protein belongs to the GrpE family. As to quaternary structure, homodimer.

Its subcellular location is the cytoplasm. Participates actively in the response to hyperosmotic and heat shock by preventing the aggregation of stress-denatured proteins, in association with DnaK and GrpE. It is the nucleotide exchange factor for DnaK and may function as a thermosensor. Unfolded proteins bind initially to DnaJ; upon interaction with the DnaJ-bound protein, DnaK hydrolyzes its bound ATP, resulting in the formation of a stable complex. GrpE releases ADP from DnaK; ATP binding to DnaK triggers the release of the substrate protein, thus completing the reaction cycle. Several rounds of ATP-dependent interactions between DnaJ, DnaK and GrpE are required for fully efficient folding. This chain is Protein GrpE, found in Streptococcus pneumoniae (strain ATCC 700669 / Spain 23F-1).